The primary structure comprises 240 residues: TATA-box-binding protein (240 aa).

The interval 21–61 (NTRQVWENQNRDGTKPATTFQSEEDIKRAAPESEKDTSATS) is disordered. The span at 44–57 (EDIKRAAPESEKDT) shows a compositional bias: basic and acidic residues. 2 consecutive repeat copies span residues 67-143 (LQNI…ARII) and 157-234 (IQNI…YPVL).

It belongs to the TBP family. Binds DNA as monomer. The 1.2 MDa TFIID complex is composed of TATA binding protein (TBP) and the 14 TBP-associated factors. One copy of each TAF1, TAF2, TAF3, TAF7, TAF8, TAF11, TAF13, two copies of each TAF4, TAF5, TAF6, TAF9, TAF10, TAF12, and three copies of TAF14. Interacts with TFC8.

It is found in the nucleus. In terms of biological role, general transcription factor that functions at the core of the DNA-binding general transcription factor complex TFIID. Binding of TFIID to a promoter (with or without TATA element) is the initial step in preinitiation complex (PIC) formation. TFIID plays a key role in the regulation of gene expression by RNA polymerase II through different activities such as transcription activator interaction, core promoter recognition and selectivity, TFIIA and TFIIB interaction, chromatin modification (histone acetylation by TAF1), facilitation of DNA opening and initiation of transcription. This chain is TATA-box-binding protein (SPT15), found in Saccharomyces cerevisiae (strain ATCC 204508 / S288c) (Baker's yeast).